The sequence spans 954 residues: E3 ubiquitin-protein ligase MIB2 (954 aa).

An MIB/HERC2 1 domain is found at 1–80 (MDLDPYASMQ…AYDLLLYDNA (80 aa)). The ZZ-type zinc finger occupies 86-138 (HPNIICDCCKKHGIRGMRWKCKMCFDYDLCTQCYMNNKHDLSHAFERYETAHS). Zn(2+) is bound by residues Cys-91, Cys-94, Cys-106, Cys-109, Cys-115, Cys-118, His-124, and His-128. Residues 149-227 (LTRITLKGTF…KVDLKCTVEA (79 aa)) form the MIB/HERC2 2 domain. ANK repeat units follow at residues 464–493 (QGRT…TVNL), 497–526 (EGDT…GADL), 530–559 (AKCT…DVNL), 563–591 (HGDT…NIDF), 597–626 (QGFN…QLVD), 631–661 (DGFT…DVNV), 665–694 (RNQT…DVNA), 698–726 (DGDT…EMGS), and 766–795 (RGKS…EQQV). 2 consecutive RING-type zinc fingers follow at residues 830-865 (CLVC…IKCQ) and 910-943 (CPIC…PICR).

The protein localises to the cytoplasm. The catalysed reaction is S-ubiquitinyl-[E2 ubiquitin-conjugating enzyme]-L-cysteine + [acceptor protein]-L-lysine = [E2 ubiquitin-conjugating enzyme]-L-cysteine + N(6)-ubiquitinyl-[acceptor protein]-L-lysine.. It functions in the pathway protein modification; protein ubiquitination. Its function is as follows. E3 ubiquitin-protein ligase that mediates ubiquitination of Delta receptors, which act as ligands of Notch proteins. Positively regulates the Delta-mediated Notch signaling by ubiquitinating the intracellular domain of Delta, leading to endocytosis of Delta receptors. In Gallus gallus (Chicken), this protein is E3 ubiquitin-protein ligase MIB2 (MIB2).